The following is a 364-amino-acid chain: Ribosomal RNA large subunit methyltransferase M (364 aa).

Residues serine 187, 220–223 (CPGG), aspartate 239, aspartate 259, and aspartate 276 contribute to the S-adenosyl-L-methionine site. Residue lysine 305 is the Proton acceptor of the active site.

It belongs to the class I-like SAM-binding methyltransferase superfamily. RNA methyltransferase RlmE family. RlmM subfamily. As to quaternary structure, monomer.

The protein resides in the cytoplasm. It carries out the reaction cytidine(2498) in 23S rRNA + S-adenosyl-L-methionine = 2'-O-methylcytidine(2498) in 23S rRNA + S-adenosyl-L-homocysteine + H(+). Its function is as follows. Catalyzes the 2'-O-methylation at nucleotide C2498 in 23S rRNA. The protein is Ribosomal RNA large subunit methyltransferase M of Aeromonas hydrophila subsp. hydrophila (strain ATCC 7966 / DSM 30187 / BCRC 13018 / CCUG 14551 / JCM 1027 / KCTC 2358 / NCIMB 9240 / NCTC 8049).